Consider the following 213-residue polypeptide: MAITQFRLFKVCTCLATVLSFLKRLICRSGRGRKLSGDQITLPTTVDYSSVPKQTDVEEWTSWDEDAPTSVKIEGGTGNAAAQQNSLEQLEPDYFKDMTPTIRKTQKIVIKKREPLSFGVPDGSTGFSSRLAATQDMPFIHQSSELGDLDTWQENSNAWEEEEDAAWQAEEVLRQQKIADREKRAAEQQRKKMEKEAQRLLKKEQNKMGVKLS.

Topologically, residues M1 to F6 are extracellular. A helical; Signal-anchor for type III membrane protein transmembrane segment spans residues R7–C27. The Cytoplasmic segment spans residues R28–S213. A Phosphoserine modification is found at S36. T41 is modified (phosphothreonine). Y94 is subject to Phosphotyrosine. Positions Q168 to G209 form a coiled coil. A compositionally biased stretch (basic and acidic residues) spans A179–N206. The interval A179 to S213 is disordered.

Homodimer.

It localises to the golgi apparatus membrane. Functionally, may participate in suppression of cell proliferation and induces apoptotic cell death through activation of interleukin-1-beta converting enzyme (ICE)-like proteases. The protein is Receptor-binding cancer antigen expressed on SiSo cells (Ebag9) of Rattus norvegicus (Rat).